We begin with the raw amino-acid sequence, 137 residues long: Large-conductance mechanosensitive channel (137 aa).

2 helical membrane passes run 16–36 and 83–103; these read VIDL…VDSI and GNFI…FLMI.

This sequence belongs to the MscL family. As to quaternary structure, homopentamer.

The protein resides in the cell inner membrane. Channel that opens in response to stretch forces in the membrane lipid bilayer. May participate in the regulation of osmotic pressure changes within the cell. In Methylibium petroleiphilum (strain ATCC BAA-1232 / LMG 22953 / PM1), this protein is Large-conductance mechanosensitive channel.